Reading from the N-terminus, the 557-residue chain is Acid-sensing ion channel 1B (557 aa).

Topologically, residues 1-98 (MVRITCTISF…SIRQGLWALV (98 aa)) are cytoplasmic. The span at 36–45 (KDGEQGKYQE) shows a compositional bias: basic and acidic residues. The tract at residues 36-57 (KDGEQGKYQEEGDDPDAYDGPE) is disordered. Over residues 46–57 (EGDDPDAYDGPE) the composition is skewed to acidic residues. The chain crosses the membrane as a helical span at residues 99 to 115 (FLLAISMFLLQVVDRVI). Topologically, residues 116 to 460 (YYLQYDYVTL…ETIEQKKAYE (345 aa)) are extracellular. Residues Asn-133 and Asn-194 are each glycosylated (N-linked (GlcNAc...) asparagine). Disulfide bonds link Cys-142-Cys-229, Cys-207-Cys-214, Cys-325-Cys-400, Cys-343-Cys-396, Cys-347-Cys-394, Cys-356-Cys-378, and Cys-358-Cys-370. N-linked (GlcNAc...) asparagine glycosylation is found at Asn-401 and Asn-428. The discontinuously helical transmembrane segment at 461–491 (LAGLLGDIGGQMGLFIGASILTILELFDYLY) threads the bilayer. The GAS motif; ion selectivity filter signature appears at 477-479 (GAS). At 492–557 (EVIKFKLCRC…GQGNFEDFTC (66 aa)) the chain is on the cytoplasmic side.

The protein belongs to the amiloride-sensitive sodium channel (TC 1.A.6) family. ASIC1 subfamily. In terms of assembly, homotrimer. Heterotrimer; with other ASIC proteins producing channel with different properties. As to expression, expressed in central nervous system.

It is found in the cell membrane. It localises to the postsynaptic cell membrane. The protein localises to the cell projection. Its subcellular location is the dendrite. It carries out the reaction Na(+)(in) = Na(+)(out). The enzyme catalyses K(+)(in) = K(+)(out). The catalysed reaction is Li(+)(in) = Li(+)(out). It catalyses the reaction Ca(2+)(in) = Ca(2+)(out). Inhibited by the diuretic drug amiloride. Forms voltage-independent, pH-gated trimeric sodium channels that act as postsynaptic excitatory receptors in the nervous system, playing a crucial role in regulating synaptic plasticity, learning, and memory. Upon extracellular pH drop this channel elicits transient, fast activating, and completely desensitizing inward currents. Displays high selectivity for sodium ions but can also permit the permeation of other cations. The sequence is that of Acid-sensing ion channel 1B (asic1b) from Danio rerio (Zebrafish).